The sequence spans 345 residues: Dihydroorotate dehydrogenase (quinone) (345 aa).

Residues 65–69 (AGLDK) and T89 contribute to the FMN site. K69 is a substrate binding site. 114–118 (NRMGF) is a binding site for substrate. FMN is bound by residues N142 and N175. Position 175 (N175) interacts with substrate. The active-site Nucleophile is the S178. N180 lines the substrate pocket. Residues K220 and T248 each contribute to the FMN site. 249–250 (NT) contributes to the substrate binding site. Residues G271, G300, and 321–322 (YT) each bind FMN.

Belongs to the dihydroorotate dehydrogenase family. Type 2 subfamily. As to quaternary structure, monomer. It depends on FMN as a cofactor.

Its subcellular location is the cell membrane. The catalysed reaction is (S)-dihydroorotate + a quinone = orotate + a quinol. It participates in pyrimidine metabolism; UMP biosynthesis via de novo pathway; orotate from (S)-dihydroorotate (quinone route): step 1/1. Functionally, catalyzes the conversion of dihydroorotate to orotate with quinone as electron acceptor. The sequence is that of Dihydroorotate dehydrogenase (quinone) from Burkholderia cenocepacia (strain ATCC BAA-245 / DSM 16553 / LMG 16656 / NCTC 13227 / J2315 / CF5610) (Burkholderia cepacia (strain J2315)).